Here is a 70-residue protein sequence, read N- to C-terminus: DNA-directed RNA polymerase subunit epsilon (70 aa).

Belongs to the RNA polymerase subunit epsilon family. RNAP is composed of a core of 2 alpha, a beta and a beta' subunit. The core is associated with a delta subunit, and at least one of epsilon or omega. When a sigma factor is associated with the core the holoenzyme is formed, which can initiate transcription.

The catalysed reaction is RNA(n) + a ribonucleoside 5'-triphosphate = RNA(n+1) + diphosphate. Its function is as follows. A non-essential component of RNA polymerase (RNAP). The chain is DNA-directed RNA polymerase subunit epsilon from Lacticaseibacillus casei (strain BL23) (Lactobacillus casei).